The sequence spans 423 residues: Lysosomal acid phosphatase (423 aa).

An N-terminal signal peptide occupies residues 1–30 (MAGKRSGWSRAALLQLLLGVNLVVMPPTRA). Topologically, residues 31–380 (RSLRFVTLLY…QLASGPADTE (350 aa)) are lumenal. His42 acts as the Nucleophile in catalysis. N-linked (GlcNAc...) asparagine glycosylation is found at Asn92, Asn133, Asn167, Asn177, Asn191, and Asn267. Intrachain disulfides connect Cys159–Cys370, Cys212–Cys310, and Cys345–Cys349. The Proton donor role is filled by Asp287. N-linked (GlcNAc...) asparagine glycans are attached at residues Asn322 and Asn331. The helical transmembrane segment at 381-401 (VIVALAVCGSILFLLIVLLLT) threads the bilayer. Residues 402–423 (VLFRMQAQPPGYRHVADGEDHA) are Cytoplasmic-facing.

Belongs to the histidine acid phosphatase family. The membrane-bound form is converted to the soluble form by sequential proteolytic processing. First, the C-terminal cytoplasmic tail is removed. Cleavage by a lysosomal protease releases the soluble form in the lysosome lumen. Post-translationally, N-glycosylated. The intermediates formed during enzymatic deglycosylation suggest that all eight predicted N-glycosylation sites are used.

It localises to the lysosome membrane. It is found in the lysosome lumen. The enzyme catalyses a phosphate monoester + H2O = an alcohol + phosphate. In Homo sapiens (Human), this protein is Lysosomal acid phosphatase (ACP2).